Here is a 176-residue protein sequence, read N- to C-terminus: Inner membrane-spanning protein YciB (176 aa).

5 helical membrane-spanning segments follow: residues 24–44 (TATA…AFRH), 49–69 (PMLW…LVLH), 76–96 (WKPT…QLAF), 119–139 (LNVV…FVAY), and 149–169 (FKLF…SLWL).

The protein belongs to the YciB family.

It localises to the cell inner membrane. Functionally, plays a role in cell envelope biogenesis, maintenance of cell envelope integrity and membrane homeostasis. The sequence is that of Inner membrane-spanning protein YciB from Paraburkholderia xenovorans (strain LB400).